We begin with the raw amino-acid sequence, 284 residues long: Bifunctional protein FolD (284 aa).

NADP(+) contacts are provided by residues 166–168 (GAS), serine 191, and isoleucine 232.

This sequence belongs to the tetrahydrofolate dehydrogenase/cyclohydrolase family. Homodimer.

It carries out the reaction (6R)-5,10-methylene-5,6,7,8-tetrahydrofolate + NADP(+) = (6R)-5,10-methenyltetrahydrofolate + NADPH. It catalyses the reaction (6R)-5,10-methenyltetrahydrofolate + H2O = (6R)-10-formyltetrahydrofolate + H(+). The protein operates within one-carbon metabolism; tetrahydrofolate interconversion. Its function is as follows. Catalyzes the oxidation of 5,10-methylenetetrahydrofolate to 5,10-methenyltetrahydrofolate and then the hydrolysis of 5,10-methenyltetrahydrofolate to 10-formyltetrahydrofolate. The sequence is that of Bifunctional protein FolD from Neisseria meningitidis serogroup A / serotype 4A (strain DSM 15465 / Z2491).